The sequence spans 50 residues: U23-theraphotoxin-Cg1a 2 (50 aa).

3 disulfides stabilise this stretch: Cys-22–Cys-36, Cys-29–Cys-41, and Cys-35–Cys-47.

The protein belongs to the neurotoxin 10 (Hwtx-1) family. 64 (Jztx-20) subfamily. In terms of tissue distribution, expressed by the venom gland.

The protein resides in the secreted. Probable ion channel inhibitor. In Chilobrachys guangxiensis (Chinese earth tiger tarantula), this protein is U23-theraphotoxin-Cg1a 2.